Reading from the N-terminus, the 522-residue chain is Sorting nexin-1 (522 aa).

Disordered stretches follow at residues 1–84 (MASG…QDQE) and 115–142 (SLPP…QEDQ). A phosphoserine mark is found at Ser32 and Ser39. Residues 35-45 (EAGDSDTEGED) show a composition bias toward acidic residues. A phosphothreonine mark is found at Thr41 and Thr48. Over residues 55–73 (KHQSPKITTSLLPINNGSK) the composition is skewed to polar residues. Phosphoserine is present on residues Ser58 and Ser72. Over residues 132 to 142 (EELEEEEQEDQ) the composition is skewed to acidic residues. The region spanning 143–272 (FDLTVGITDP…EFLEKEELPR (130 aa)) is the PX domain. The a 1,2-diacyl-sn-glycero-3-phospho-(1D-myo-inositol-3-phosphate) site is built by Arg186, Ser188, and Lys214. Ser188 is subject to Phosphoserine. Position 237 is an N6-acetyllysine (Lys237). A 1,2-diacyl-sn-glycero-3-phospho-(1D-myo-inositol-3-phosphate) is bound at residue Arg238. Ser280 carries the post-translational modification Phosphoserine. Residues 281–298 (GAGLLKMFNKATDAVSKM) form a membrane-binding amphipathic helix region. In terms of domain architecture, BAR spans 302–522 (MNESDIWFEE…AFLPEAKAIS (221 aa)).

The protein belongs to the sorting nexin family. Predominantly forms heterodimers with BAR domain-containing sorting nexins SNX5, SNX6 and SNX32; can self-associate to form homodimers. The heterodimers are proposed to self-assemble into helical arrays on the membrane to stabilize and expand local membrane curvature underlying endosomal tubule formation. Thought to be a component of the originally described retromer complex (also called SNX-BAR retromer) which is a pentamer containing the heterotrimeric retromer cargo-selective complex (CSC), also described as vacuolar protein sorting subcomplex (VPS) and a heterodimeric membrane-deforming subcomplex formed between SNX1 or SNX2 and SNX5 or SNX6 (also called SNX-BAR subcomplex); the respective CSC and SNX-BAR subcomplexes associate with low affinity. Interacts with SNX5, SNX6, SNX32, VPS26A, VPS29, VPS35, DRD5, DENND5A, KALRN, RHOG (GDP-bound form). The interaction with SNX2 is reported controversially. Interacts with DNAJC13; prevented by presence of HGS. Interacts with HGS.

The protein localises to the endosome membrane. Its subcellular location is the golgi apparatus. It localises to the trans-Golgi network membrane. It is found in the early endosome membrane. The protein resides in the cell projection. The protein localises to the lamellipodium. Functionally, involved in several stages of intracellular trafficking. Interacts with membranes containing phosphatidylinositol 3-phosphate (PtdIns(3P)) or phosphatidylinositol 3,5-bisphosphate (PtdIns(3,5)P2). Acts in part as component of the retromer membrane-deforming SNX-BAR subcomplex. The SNX-BAR retromer mediates retrograde transport of cargo proteins from endosomes to the trans-Golgi network (TGN) and is involved in endosome-to-plasma membrane transport for cargo protein recycling. The SNX-BAR subcomplex functions to deform the donor membrane into a tubular profile called endosome-to-TGN transport carrier (ETC). Can sense membrane curvature and has in vitro vesicle-to-membrane remodeling activity. Involved in retrograde endosome-to-TGN transport of lysosomal enzyme receptors (IGF2R, M6PR and SORT1) and Shiginella dysenteria toxin stxB. Plays a role in targeting ligand-activated EGFR to the lysosomes for degradation after endocytosis from the cell surface and release from the Golgi. Involvement in retromer-independent endocytic trafficking of P2RY1 and lysosomal degradation of protease-activated receptor-1/F2R. Promotes KALRN- and RHOG-dependent but retromer-independent membrane remodeling such as lamellipodium formation; the function is dependent on GEF activity of KALRN. Required for endocytosis of DRD5 upon agonist stimulation but not for basal receptor trafficking. This is Sorting nexin-1 (SNX1) from Homo sapiens (Human).